The sequence spans 164 residues: Cyanate hydratase (164 aa).

Catalysis depends on residues R104, E107, and S130.

This sequence belongs to the cyanase family.

The catalysed reaction is cyanate + hydrogencarbonate + 3 H(+) = NH4(+) + 2 CO2. In terms of biological role, catalyzes the reaction of cyanate with bicarbonate to produce ammonia and carbon dioxide. The chain is Cyanate hydratase from Botryotinia fuckeliana (strain B05.10) (Noble rot fungus).